A 161-amino-acid polypeptide reads, in one-letter code: MTESQQQPVFVIEKIYVKDLSLEIPHAPRIFLEREAPEINFQLATSHNAVDGEIHEVVVTATVTARLKEKDQVMFLVEAHQTGIFRIGNVPGDEVEPVLSVLCPNILFPYLRETISDTVTRAGFPPVILNPVNFEAIYHQKKQQETAGEQPDQPADTITRH.

The interval 141–161 (KKQQETAGEQPDQPADTITRH) is disordered.

The protein belongs to the SecB family. In terms of assembly, homotetramer, a dimer of dimers. One homotetramer interacts with 1 SecA dimer.

It localises to the cytoplasm. In terms of biological role, one of the proteins required for the normal export of preproteins out of the cell cytoplasm. It is a molecular chaperone that binds to a subset of precursor proteins, maintaining them in a translocation-competent state. It also specifically binds to its receptor SecA. This chain is Protein-export protein SecB, found in Nitrosomonas europaea (strain ATCC 19718 / CIP 103999 / KCTC 2705 / NBRC 14298).